Consider the following 181-residue polypeptide: Large ribosomal subunit protein uL5 (181 aa).

It belongs to the universal ribosomal protein uL5 family. As to quaternary structure, part of the 50S ribosomal subunit; part of the 5S rRNA/L5/L18/L25 subcomplex. Contacts the 5S rRNA and the P site tRNA. Forms a bridge to the 30S subunit in the 70S ribosome.

In terms of biological role, this is one of the proteins that bind and probably mediate the attachment of the 5S RNA into the large ribosomal subunit, where it forms part of the central protuberance. In the 70S ribosome it contacts protein S13 of the 30S subunit (bridge B1b), connecting the 2 subunits; this bridge is implicated in subunit movement. Contacts the P site tRNA; the 5S rRNA and some of its associated proteins might help stabilize positioning of ribosome-bound tRNAs. The protein is Large ribosomal subunit protein uL5 of Nitrosococcus oceani (strain ATCC 19707 / BCRC 17464 / JCM 30415 / NCIMB 11848 / C-107).